A 91-amino-acid chain; its full sequence is ATP synthase subunit c (91 aa).

2 helical membrane-spanning segments follow: residues 4 to 24 (FTMC…GTGI) and 53 to 73 (IGLA…LIIL).

This sequence belongs to the ATPase C chain family. F-type ATPases have 2 components, F(1) - the catalytic core - and F(0) - the membrane proton channel. F(1) has five subunits: alpha(3), beta(3), gamma(1), delta(1), epsilon(1). F(0) has three main subunits: a(1), b(2) and c(10-14). The alpha and beta chains form an alternating ring which encloses part of the gamma chain. F(1) is attached to F(0) by a central stalk formed by the gamma and epsilon chains, while a peripheral stalk is formed by the delta and b chains.

Its subcellular location is the cell inner membrane. Its function is as follows. F(1)F(0) ATP synthase produces ATP from ADP in the presence of a proton or sodium gradient. F-type ATPases consist of two structural domains, F(1) containing the extramembraneous catalytic core and F(0) containing the membrane proton channel, linked together by a central stalk and a peripheral stalk. During catalysis, ATP synthesis in the catalytic domain of F(1) is coupled via a rotary mechanism of the central stalk subunits to proton translocation. Key component of the F(0) channel; it plays a direct role in translocation across the membrane. A homomeric c-ring of between 10-14 subunits forms the central stalk rotor element with the F(1) delta and epsilon subunits. The protein is ATP synthase subunit c of Geotalea daltonii (strain DSM 22248 / JCM 15807 / FRC-32) (Geobacter daltonii).